Consider the following 100-residue polypeptide: Large ribosomal subunit protein uL23 (100 aa).

Belongs to the universal ribosomal protein uL23 family. In terms of assembly, part of the 50S ribosomal subunit. Contacts protein L29, and trigger factor when it is bound to the ribosome.

Functionally, one of the early assembly proteins it binds 23S rRNA. One of the proteins that surrounds the polypeptide exit tunnel on the outside of the ribosome. Forms the main docking site for trigger factor binding to the ribosome. The sequence is that of Large ribosomal subunit protein uL23 from Shewanella oneidensis (strain ATCC 700550 / JCM 31522 / CIP 106686 / LMG 19005 / NCIMB 14063 / MR-1).